We begin with the raw amino-acid sequence, 78 residues long: Small ribosomal subunit protein bS16c (78 aa).

The protein belongs to the bacterial ribosomal protein bS16 family.

It localises to the plastid. The protein localises to the chloroplast. This Phaeodactylum tricornutum (strain CCAP 1055/1) protein is Small ribosomal subunit protein bS16c.